Consider the following 391-residue polypeptide: MTEEFNESMINDIKEGDKVTGEVQQVEDKQVVVHINGGKFNGIIPISQLSTHHIDSPSEVVKEGDEVEAYVTKVEFDEENETGAYILSRRQLETEKSYSYLQEKLDNNEIIEAKVTEVVKGGLVVDVGQRGFVPASLISTDFIEDFSVFDGQTIRIKVEELDPENNRVILSRKAVEQEENDAKKDQLLQSLNEGDVIDGKVARLTQFGAFIDIGGVDGLVHVSELSHEHVQTPEEVVSIGQDVKVKIKSIDRDTERISLSIKDTLPTPFENIKGQFHENDVIEGVVVRLANFGAFVEIAPGVQGLVHISEIAHKHIGTPGEVLEPGQQVNVKILGIDEENERVSLSIKATLPNEDVVESDPSTTKAYLENEEEDNPTIGDMIGDKLKNLKL.

4 S1 motif domains span residues 16–90 (GDKV…LSRR), 108–173 (NEII…LSRK), 194–262 (GDVI…LSIK), and 279–348 (NDVI…LSIK).

It belongs to the bacterial ribosomal protein bS1 family.

Binds mRNA; thus facilitating recognition of the initiation point. It is needed to translate mRNA with a short Shine-Dalgarno (SD) purine-rich sequence. The sequence is that of Small ribosomal subunit protein bS1 (rpsA) from Staphylococcus aureus (strain MSSA476).